The chain runs to 317 residues: Melanocyte-stimulating hormone receptor (317 aa).

Residues 1-20 (MPVQGSQRSLLGAVNSTPTA) show a composition bias toward polar residues. The interval 1–23 (MPVQGSQRSLLGAVNSTPTATPH) is disordered. The Extracellular portion of the chain corresponds to 1–37 (MPVQGSQRSLLGAVNSTPTATPHLRPAANQTGPQCLE). N-linked (GlcNAc...) asparagine glycosylation is present at Asn29. The helical transmembrane segment at 38-63 (VSIPDGLFLCLGLVSLVENTLVVAAI) threads the bilayer. At 64 to 72 (AKNRNLHSP) the chain is on the cytoplasmic side. Residues 73–93 (MYCFICCLALSDLLVSVSSVL) form a helical membrane-spanning segment. Residues 94–118 (ETAVLLLLGAGALAAQATVVQQLGN) lie on the Extracellular side of the membrane. The chain crosses the membrane as a helical span at residues 119–140 (VIDVLLCSSMVSSLFFLGAIAM). The Cytoplasmic portion of the chain corresponds to 141-163 (DRYISIFYALRYHSIVTLARARR). Residues 164–183 (AIAAIWAASILSSTLFIAYC) form a helical membrane-spanning segment. The Extracellular segment spans residues 184–191 (DRTAALLC). The chain crosses the membrane as a helical span at residues 192–211 (LVVFFLAMLVLMAVLYVHML). Over 212-240 (TQARQHAQGIARLHKRQRPVQQGWGLKGA) the chain is Cytoplasmic. The chain crosses the membrane as a helical span at residues 241-266 (ATLTILLGVFFLCWGPFFLHLTLIAV). Topologically, residues 267–279 (CPQHPTCSCIFKN) are extracellular. A helical transmembrane segment spans residues 280–300 (FRLFLALIVCNAIVDPLIYAF). The Cytoplasmic portion of the chain corresponds to 301–317 (RSQELRKTLKEVLLFFW).

It belongs to the G-protein coupled receptor 1 family. Interacts with MGRN1, but does not undergo MGRN1-mediated ubiquitination; this interaction competes with GNAS-binding and thus inhibits agonist-induced cAMP production. Interacts with OPN3; the interaction results in a decrease in MC1R-mediated cAMP signaling and ultimately a decrease in melanin production in melanocytes.

The protein resides in the cell membrane. Receptor for MSH (alpha, beta and gamma) and ACTH. The activity of this receptor is mediated by G proteins which activate adenylate cyclase. Mediates melanogenesis, the production of eumelanin (black/brown) and phaeomelanin (red/yellow), via regulation of cAMP signaling in melanocytes. The protein is Melanocyte-stimulating hormone receptor (MC1R) of Lemur catta (Ring-tailed lemur).